The primary structure comprises 401 residues: MKNVYLDNNATTRIDPMVLEAMMPYLRDYYGNPSSIHDFGGPCRAGLECAREQVASLLGAAYTSEIIFTSCATEATSTAIYSAIALAPERREIITTAVEHPATLAVCEHLERQGYMIHRIGVSEEGALDTAHYYDALSENVALVTMMWANNETGVLFPVSEMATAAHERGILFHCDAVQAVGKIPISLRATDIDMLSCSAHKIHGPKGCGCLYLRRNTRFRPLVRGGHQERGRRAGTENIAGIVGMGAACELADVHMPMMASVQEMRDRLETGLLTTIPHTLLMGANQPRTPNTVNIAFEYIEGEAILLLLNHCGIAASSGSACTSGSLEPSHVMRAMNIPYTAAHGSIRFSLSRFTREREIEWAIEQMPDIVARLRTLSPYWQQDKVQIAQGGLFAPTYG.

Residues 72-73 (AT), asparagine 151, glutamine 179, and 199-201 (SAH) contribute to the pyridoxal 5'-phosphate site. At lysine 202 the chain carries N6-(pyridoxal phosphate)lysine. Position 237 (threonine 237) interacts with pyridoxal 5'-phosphate. Cysteine 324 acts as the Cysteine persulfide intermediate in catalysis. Cysteine 324 is a binding site for [2Fe-2S] cluster.

Belongs to the class-V pyridoxal-phosphate-dependent aminotransferase family. NifS/IscS subfamily. As to quaternary structure, homodimer. Requires pyridoxal 5'-phosphate as cofactor.

The enzyme catalyses (sulfur carrier)-H + L-cysteine = (sulfur carrier)-SH + L-alanine. Its function is as follows. Catalyzes the removal of elemental sulfur atoms from cysteine to produce alanine. Seems to participate in the biosynthesis of the nitrogenase metalloclusters by providing the inorganic sulfur required for the Fe-S core formation. This is Cysteine desulfurase from Enterobacter agglomerans (Erwinia herbicola).